A 440-amino-acid chain; its full sequence is Chromosome partition protein MukF (440 aa).

Positions 208-236 (LSETSGTLRELQDTLEAAGDKLQANLLRI) are leucine-zipper.

Belongs to the MukF family. In terms of assembly, interacts, and probably forms a ternary complex, with MukE and MukB via its C-terminal region. The complex formation is stimulated by calcium or magnesium. It is required for an interaction between MukE and MukB.

It localises to the cytoplasm. The protein localises to the nucleoid. Involved in chromosome condensation, segregation and cell cycle progression. May participate in facilitating chromosome segregation by condensation DNA from both sides of a centrally located replisome during cell division. Not required for mini-F plasmid partitioning. Probably acts via its interaction with MukB and MukE. Overexpression results in anucleate cells. It has a calcium binding activity. The sequence is that of Chromosome partition protein MukF from Salmonella paratyphi B (strain ATCC BAA-1250 / SPB7).